The sequence spans 117 residues: Large ribosomal subunit protein uL18 (117 aa).

This sequence belongs to the universal ribosomal protein uL18 family. As to quaternary structure, part of the 50S ribosomal subunit; part of the 5S rRNA/L5/L18/L25 subcomplex. Contacts the 5S and 23S rRNAs.

In terms of biological role, this is one of the proteins that bind and probably mediate the attachment of the 5S RNA into the large ribosomal subunit, where it forms part of the central protuberance. In Vibrio cholerae serotype O1 (strain ATCC 39541 / Classical Ogawa 395 / O395), this protein is Large ribosomal subunit protein uL18.